Consider the following 843-residue polypeptide: Taste receptor type 1 member 2 (843 aa).

Positions 1–19 (MGPQARTLHLLFLLLHALP) are cleaved as a signal peptide. Residues 20–570 (KPVMLVGNSD…AFLEWHEVPT (551 aa)) are Extracellular-facing. Residues asparagine 87, asparagine 296, asparagine 316, asparagine 355, asparagine 372, asparagine 432, asparagine 484, asparagine 491, and asparagine 531 are each glycosylated (N-linked (GlcNAc...) asparagine). The helical transmembrane segment at 571–591 (IVVTILAALGFISTLAILLIF) threads the bilayer. At 592-606 (WRHFQTPMVRSAGGP) the chain is on the cytoplasmic side. The helical transmembrane segment at 607-627 (MCFLMLVPLLLAFGMVPVYVG) threads the bilayer. At 628-642 (PPTVFSCFCRQAFFT) the chain is on the extracellular side. Residues 643–663 (VCFSVCLSCITVRSFQIVCVF) form a helical membrane-spanning segment. Topologically, residues 664-682 (KMARRLPSAYGFWMRYHGP) are cytoplasmic. A helical transmembrane segment spans residues 683-703 (YVFVAFITAVKVALVAGNMLA). Residues 704-731 (TTINPIGRTDPDDPNIIILSCHPNYRNG) lie on the Extracellular side of the membrane. Residues 732–752 (LLFNTSMDLLLSVLGFSFAYV) traverse the membrane as a helical segment. The Cytoplasmic segment spans residues 753–764 (GKELPTNYNEAK). The chain crosses the membrane as a helical span at residues 765-785 (FITLSMTFSFTSSISLCTFMS). At 786–789 (VHDG) the chain is on the extracellular side. A helical transmembrane segment spans residues 790 to 810 (VLVTIMDLLVTVLNFLAIGLG). The Cytoplasmic segment spans residues 811–843 (YFGPKCYMILFYPERNTSAYFNSMIQGYTMRKS).

This sequence belongs to the G-protein coupled receptor 3 family. TAS1R subfamily. As to quaternary structure, forms heterodimers with TAS1R3. As to expression, expressed mainly in circumvallate and foliate taste papillae.

It localises to the cell membrane. Its function is as follows. Putative taste receptor. TAS1R2/TAS1R3 recognizes diverse natural and synthetic sweeteners. This is Taste receptor type 1 member 2 (Tas1r2) from Mus musculus (Mouse).